The sequence spans 220 residues: Peptidyl-tRNA hydrolase (220 aa).

Tyrosine 14 is a tRNA binding site. The active-site Proton acceptor is the histidine 19. Residues phenylalanine 66, asparagine 68, and asparagine 114 each coordinate tRNA. Residues 184–220 (QAFNSTDLRPRPEPVPAPQPADVSGPQETGPAERPEV) are disordered.

The protein belongs to the PTH family. Monomer.

It localises to the cytoplasm. The catalysed reaction is an N-acyl-L-alpha-aminoacyl-tRNA + H2O = an N-acyl-L-amino acid + a tRNA + H(+). Hydrolyzes ribosome-free peptidyl-tRNAs (with 1 or more amino acids incorporated), which drop off the ribosome during protein synthesis, or as a result of ribosome stalling. In terms of biological role, catalyzes the release of premature peptidyl moieties from peptidyl-tRNA molecules trapped in stalled 50S ribosomal subunits, and thus maintains levels of free tRNAs and 50S ribosomes. This chain is Peptidyl-tRNA hydrolase, found in Deinococcus deserti (strain DSM 17065 / CIP 109153 / LMG 22923 / VCD115).